Here is a 406-residue protein sequence, read N- to C-terminus: MKYDEIMVRYGELSTKGHNKKSFIDRLGSNVRKALHQYDQVKIHPNQDRLHVELNGTDAEPVMERLKQVFGIQNFSPSLRVEKDFDSVVEAAVAIFKEQVQGPTTFKVETKRADHKFPMGTFEMNKQLGGALLKAFPTDLSVDVHHPDITLRVEIRLNGIYLTSAKILGAGGLPVGTAGKGMMMLSGGIDSPVAAYLALKRGVSLEMVHFYSPPYTSEQALAKAKELTGKLAKYSGSIKFIQVPFTEIQETVKEKVPEGYLMTVQRRLMLRLACALAQKRAGLAVFNGESLGQVASQTMESMLAIEDVTTMPVLRPVLSYDKNEIIKIAEDIDTYDLSILPYEDCCTVFTPPSPKTKPNLKRARSYEARLDVEGLMQRALDGIEITEIHAGDEFLNQNQDVFAELL.

Residues 60–166 (EPVMERLKQV…LNGIYLTSAK (107 aa)) form the THUMP domain. Residues 184-185 (ML), 209-210 (HF), R266, G288, and Q297 each bind ATP.

Belongs to the ThiI family.

The protein localises to the cytoplasm. The catalysed reaction is [ThiI sulfur-carrier protein]-S-sulfanyl-L-cysteine + a uridine in tRNA + 2 reduced [2Fe-2S]-[ferredoxin] + ATP + H(+) = [ThiI sulfur-carrier protein]-L-cysteine + a 4-thiouridine in tRNA + 2 oxidized [2Fe-2S]-[ferredoxin] + AMP + diphosphate. It carries out the reaction [ThiS sulfur-carrier protein]-C-terminal Gly-Gly-AMP + S-sulfanyl-L-cysteinyl-[cysteine desulfurase] + AH2 = [ThiS sulfur-carrier protein]-C-terminal-Gly-aminoethanethioate + L-cysteinyl-[cysteine desulfurase] + A + AMP + 2 H(+). Its pathway is cofactor biosynthesis; thiamine diphosphate biosynthesis. In terms of biological role, catalyzes the ATP-dependent transfer of a sulfur to tRNA to produce 4-thiouridine in position 8 of tRNAs, which functions as a near-UV photosensor. Also catalyzes the transfer of sulfur to the sulfur carrier protein ThiS, forming ThiS-thiocarboxylate. This is a step in the synthesis of thiazole, in the thiamine biosynthesis pathway. The sulfur is donated as persulfide by IscS. This chain is Probable tRNA sulfurtransferase, found in Limosilactobacillus fermentum (strain NBRC 3956 / LMG 18251) (Lactobacillus fermentum).